Reading from the N-terminus, the 91-residue chain is DNA-directed RNA polymerase subunit omega (91 aa).

Belongs to the RNA polymerase subunit omega family. As to quaternary structure, the RNAP catalytic core consists of 2 alpha, 1 beta, 1 beta' and 1 omega subunit. When a sigma factor is associated with the core the holoenzyme is formed, which can initiate transcription. The rRNA transcription and antitermination complex (rrnTAC) consists of RNAP, NusA, NusB, NusE (rpsJ), NusG, SubB, ribosomal protein S4, DNA and precursor rRNA; S4 is more flexible than other subunits.

The enzyme catalyses RNA(n) + a ribonucleoside 5'-triphosphate = RNA(n+1) + diphosphate. Its function is as follows. Promotes RNA polymerase (RNAP) assembly. Latches the N- and C-terminal regions of the beta' subunit thereby facilitating its interaction with the beta and alpha subunits. Part of the processive rRNA transcription and antitermination complex (rrnTAC). The complex forms an RNA-chaperone ring around the RNA exit tunnel of RNAP. It supports rapid transcription and antitermination of rRNA operons, cotranscriptional rRNA folding, and annealing of distal rRNA regions to allow correct ribosome biogenesis. The polypeptide is DNA-directed RNA polymerase subunit omega (rpoZ) (Escherichia coli (strain K12)).